Reading from the N-terminus, the 520-residue chain is Maturase K (520 aa).

Belongs to the intron maturase 2 family. MatK subfamily.

Its subcellular location is the plastid. The protein localises to the chloroplast. Functionally, usually encoded in the trnK tRNA gene intron. Probably assists in splicing its own and other chloroplast group II introns. The chain is Maturase K from Ruscus aculeatus (Butcher's broom).